A 1225-amino-acid chain; its full sequence is ABC transporter B family member 18 (1225 aa).

6 consecutive transmembrane segments (helical) span residues Met-23 to Ile-43, Val-70 to Trp-90, Leu-146 to Trp-168, Ile-172 to Arg-194, Gly-252 to Gly-272, and Gly-284 to Leu-304. In terms of domain architecture, ABC transmembrane type-1 1 spans Met-23–Glu-312. One can recognise an ABC transporter 1 domain in the interval Val-347–Arg-583. Gly-382 to Ser-389 contacts ATP. A glycan (N-linked (GlcNAc...) asparagine) is linked at Asn-530. Helical transmembrane passes span Ala-657–Ser-677 and Ile-699–His-719. An ABC transmembrane type-1 2 domain is found at Ala-657–Lys-945. Asn-754 carries N-linked (GlcNAc...) asparagine glycosylation. Transmembrane regions (helical) follow at residues Leu-780–Trp-800, Ile-804–Leu-824, Ser-880–Leu-900, and Phe-919–Met-939. 2 N-linked (GlcNAc...) asparagine glycosylation sites follow: Asn-960 and Asn-1000. Residues Ile-980–Val-1218 enclose the ABC transporter 2 domain. Gly-1015–Ser-1022 contributes to the ATP binding site. An N-linked (GlcNAc...) asparagine glycan is attached at Asn-1201.

The protein belongs to the ABC transporter superfamily. ABCB family. Multidrug resistance exporter (TC 3.A.1.201) subfamily.

It localises to the membrane. The sequence is that of ABC transporter B family member 18 (ABCB18) from Arabidopsis thaliana (Mouse-ear cress).